The primary structure comprises 116 residues: MKYCLRMAVEGALTELFNIHGLNLQNQCVQIIQQWKNENYLGMVQSGSLMIEEFHDNAFALLLFIEIRAVALLEAVVEHLENRLQFDLAVIFHQHSGGDRCHLRDLRIQILADRLD.

In Human adenovirus A serotype 12 (HAdV-12), this protein is Probable early E4 11 kDa protein.